The following is a 364-amino-acid chain: Tubulin alpha-2 chain (364 aa).

Residues glycine 59, threonine 60, threonine 94, asparagine 121, and asparagine 144 each coordinate GTP. Glutamate 170 is a catalytic residue.

This sequence belongs to the tubulin family. As to quaternary structure, dimer of alpha and beta chains. A typical microtubule is a hollow water-filled tube with an outer diameter of 25 nm and an inner diameter of 15 nM. Alpha-beta heterodimers associate head-to-tail to form protofilaments running lengthwise along the microtubule wall with the beta-tubulin subunit facing the microtubule plus end conferring a structural polarity. Microtubules usually have 13 protofilaments but different protofilament numbers can be found in some organisms and specialized cells. Mg(2+) is required as a cofactor. In terms of processing, undergoes a tyrosination/detyrosination cycle, the cyclic removal and re-addition of a C-terminal tyrosine residue by the enzymes tubulin tyrosine carboxypeptidase (TTCP) and tubulin tyrosine ligase (TTL), respectively.

The protein localises to the cytoplasm. Its subcellular location is the cytoskeleton. It carries out the reaction GTP + H2O = GDP + phosphate + H(+). In terms of biological role, tubulin is the major constituent of microtubules, a cylinder consisting of laterally associated linear protofilaments composed of alpha- and beta-tubulin heterodimers. Microtubules grow by the addition of GTP-tubulin dimers to the microtubule end, where a stabilizing cap forms. Below the cap, tubulin dimers are in GDP-bound state, owing to GTPase activity of alpha-tubulin. This chain is Tubulin alpha-2 chain (TUBA2), found in Anemia phyllitidis (Fern).